The following is a 444-amino-acid chain: Phosphoglucosamine mutase (444 aa).

S103 serves as the catalytic Phosphoserine intermediate. 4 residues coordinate Mg(2+): S103, D241, D243, and D245. The residue at position 103 (S103) is a Phosphoserine.

Belongs to the phosphohexose mutase family. Mg(2+) is required as a cofactor. In terms of processing, activated by phosphorylation.

The enzyme catalyses alpha-D-glucosamine 1-phosphate = D-glucosamine 6-phosphate. In terms of biological role, catalyzes the conversion of glucosamine-6-phosphate to glucosamine-1-phosphate. The polypeptide is Phosphoglucosamine mutase (Deinococcus radiodurans (strain ATCC 13939 / DSM 20539 / JCM 16871 / CCUG 27074 / LMG 4051 / NBRC 15346 / NCIMB 9279 / VKM B-1422 / R1)).